The primary structure comprises 223 residues: UPF0502 protein Sde_2426 (223 aa).

The protein belongs to the UPF0502 family.

This chain is UPF0502 protein Sde_2426, found in Saccharophagus degradans (strain 2-40 / ATCC 43961 / DSM 17024).